We begin with the raw amino-acid sequence, 346 residues long: MVEKEEAGGGISEEEAAQYDRQIRLWGLEAQKRLRASRVLLVGLKGLGAEIAKNLILAGVKGLTMLDHEQVTPEDPGAQFLIRTGSVGRNRAEASLERAQNLNPMVDVKVDTEDIEKKPESFFTQFDAVCLTCCSRDVIVKVDQICHKNSIKFFTGDVFGYHGYTFANLGEHEFVEEKTKVAKVSQGVEDGPDTKRAKLDSSETTMVKKKVVFCPVKEALEVDWSSEKAKAALKRTTSDYFLLQVLLKFRTDKGRDPSSDTYEEDSELLLQIRNDVLDSLGISPDLLPEDFVRYCFSEMAPVCAVVGGILAQEIVKALSQRDPPHNNFFFFDGMKGNGIVECLGPK.

Residue M1 is modified to N-acetylmethionine. Position 2 is an N-acetylvaline; in SUMO-activating enzyme subunit 1, N-terminally processed (V2). Position 12 is a phosphoserine (S12). K198 is modified (N6-acetyllysine).

Belongs to the ubiquitin-activating E1 family. Heterodimer of SAE1 and UBA2/SAE2. The heterodimer corresponds to the two domains that are encoded on a single polypeptide chain in ubiquitin-activating enzyme E1. Interacts with UBE2I. Expression level increases during S phase and drops in G2 phase (at protein level).

The protein resides in the nucleus. It functions in the pathway protein modification; protein sumoylation. Its function is as follows. The heterodimer acts as an E1 ligase for SUMO1, SUMO2, SUMO3, and probably SUMO4. It mediates ATP-dependent activation of SUMO proteins followed by formation of a thioester bond between a SUMO protein and a conserved active site cysteine residue on UBA2/SAE2. In Homo sapiens (Human), this protein is SUMO-activating enzyme subunit 1 (SAE1).